The chain runs to 179 residues: Large ribosomal subunit protein uL10 (179 aa).

The protein belongs to the universal ribosomal protein uL10 family. As to quaternary structure, part of the ribosomal stalk of the 50S ribosomal subunit. The N-terminus interacts with L11 and the large rRNA to form the base of the stalk. The C-terminus forms an elongated spine to which L12 dimers bind in a sequential fashion forming a multimeric L10(L12)X complex.

Its function is as follows. Forms part of the ribosomal stalk, playing a central role in the interaction of the ribosome with GTP-bound translation factors. In Thermomicrobium roseum (strain ATCC 27502 / DSM 5159 / P-2), this protein is Large ribosomal subunit protein uL10.